Here is a 564-residue protein sequence, read N- to C-terminus: Beta-catenin-like protein 1 homolog (564 aa).

The segment at 1 to 56 (MDVDSIFKNTEETNKKRNPEEADSLEPASSRRRLAEENSDEENEEFDEEGGRFFGS) is disordered. Over residues 9–20 (NTEETNKKRNPE) the composition is skewed to basic and acidic residues. Acidic residues predominate over residues 37 to 48 (ENSDEENEEFDE). S39 is subject to Phosphoserine. HEAT repeat units follow at residues 83 to 133 (PTEL…VLSE) and 138 to 177 (IPIF…DEDV). ARM repeat units follow at residues 179–229 (PDAL…LLSV), 230–276 (DNSI…LANS), 277–326 (KEAK…LVQE), 328–366 (KGKS…LLFG), and 367–411 (PLST…LFRS). Residues 465–528 (EKSTKWFLQQ…DALKNYHENL (64 aa)) are a coiled coil.

It localises to the nucleus. In terms of biological role, probable spliceosomal component involved in the activation of pre-mRNA splicing. In Schizosaccharomyces pombe (strain 972 / ATCC 24843) (Fission yeast), this protein is Beta-catenin-like protein 1 homolog (ctnnbl1).